Here is a 309-residue protein sequence, read N- to C-terminus: Porphobilinogen deaminase (309 aa).

S-(dipyrrolylmethanemethyl)cysteine is present on C242.

This sequence belongs to the HMBS family. In terms of assembly, monomer. It depends on dipyrromethane as a cofactor.

The enzyme catalyses 4 porphobilinogen + H2O = hydroxymethylbilane + 4 NH4(+). It functions in the pathway porphyrin-containing compound metabolism; protoporphyrin-IX biosynthesis; coproporphyrinogen-III from 5-aminolevulinate: step 2/4. In terms of biological role, tetrapolymerization of the monopyrrole PBG into the hydroxymethylbilane pre-uroporphyrinogen in several discrete steps. The chain is Porphobilinogen deaminase from Legionella pneumophila subsp. pneumophila (strain Philadelphia 1 / ATCC 33152 / DSM 7513).